The primary structure comprises 147 residues: Small ribosomal subunit protein eS19 (147 aa).

This sequence belongs to the eukaryotic ribosomal protein eS19 family. In terms of assembly, component of the small ribosomal subunit.

It localises to the cytoplasm. The protein resides in the nucleus. Component of the small ribosomal subunit. The ribosome is a large ribonucleoprotein complex responsible for the synthesis of proteins in the cell. Required for pre-rRNA processing and maturation of 40S ribosomal subunits. The sequence is that of Small ribosomal subunit protein eS19 (rps19) from Gillichthys mirabilis (Long-jawed mudsucker).